Consider the following 149-residue polypeptide: Arginine regulator (149 aa).

This sequence belongs to the ArgR family.

It localises to the cytoplasm. Its pathway is amino-acid degradation; L-arginine degradation via ADI pathway. Its function is as follows. Regulates the transcription of the arc operon, involved in arginine catabolism. The polypeptide is Arginine regulator (argR1) (Bacillus cereus (strain ATCC 10987 / NRS 248)).